The following is a 393-amino-acid chain: MRKKLTALVLSALPLAAVADVSLYGEIKAGVEGRNIQAQLTEQPQVTNGVQGNQVKVTKAKSRIRTKISDFGSFIGFKGSEDLGEGLKAVWQLEQDVSVAGGGASQWGNRESFIGLAGEFGTLRAGRVANQFDDASQAINPWDSNNDVASQLGIFKRHDDMPVSVRYDSPEFSGFSGSVQFVPAQNSKSAYKPAYYTKDTNNNLTLVPAVVGKPGSDVYYAGLNYKNGGFAGNYAFKYARHANVGRNAFELFLIGSATSDEAKGTDPLKNHQVHRLTGGYEEGGLNLALAAQLDLSENGDKAKTKNSTTEIAATASYRFGNAVPRISYAHGFDLIERGKKGENTSYDQIIAGVDYDFSKRTSAIVSGAWLKRNTGIGNYTQINAASVGLRHKF.

An N-terminal signal peptide occupies residues 1–19 (MRKKLTALVLSALPLAAVA).

It belongs to the Gram-negative porin family. In terms of assembly, homotrimer.

It localises to the cell outer membrane. Functionally, serves as a slightly cation selective porin. Major antigen on the gonococcal cell surface and it may have pathogenic properties in addition to its porin activity. The protein is Major outer membrane protein P.IA (porA) of Neisseria meningitidis serogroup C.